Reading from the N-terminus, the 805-residue chain is Transcription factor SFL1 (805 aa).

A compositionally biased stretch (low complexity) spans 1–24; that stretch reads MSHLVSSSLGTTTTATPTSRSPHT. The interval 1-110 is disordered; that stretch reads MSHLVSSSLG…NNNVSNNNST (110 aa). Polar residues predominate over residues 25 to 69; the sequence is NHSTPYNQNSITSNRSSPVPKNSVNSRIIPQTMNPPIDMKSNNIL. A compositionally biased stretch (basic and acidic residues) spans 71–85; it reads PEKDTDTSRGDHSES. Over residues 86–110 the composition is skewed to low complexity; the sequence is KASSISSASGTTTTNNNNVSNNNST. Residues 117–226 mediate DNA binding; sequence FIHKLYDMLH…LKNIKRRSSK (110 aa). 5 disordered regions span residues 273–336, 438–483, 513–675, 691–746, and 759–805; these read MQSP…NQSP, QSNF…VAPQ, REDS…PAPQ, HQKS…SENH, and VSEL…RKLE. The segment covering 295–310 has biased composition (low complexity); it reads QQQQQQQQQQQQQQQQ. Polar residues-rich tracts occupy residues 454–480 and 533–556; these read HGNSVSSNYHLESTNVSRNPSTTNLNV and PSRNSSRILIEESTPTHPPTNFNP. Positions 557 to 566 are enriched in low complexity; it reads QQSQSQSQVQ. Polar residues-rich tracts occupy residues 581 to 597, 604 to 614, and 622 to 635; these read ESTYSPLSHSSNKSQIL, VNHSPLVQQQQ, and NDSSVAPPSQSSLP. The span at 637–659 shows a compositional bias: low complexity; it reads TRPLSRQQQQQQQTLHHPSTTSS. The segment covering 716–738 has biased composition (polar residues); it reads PISSTAPTTMITSTSKPTSTSGA.

This sequence belongs to the HSF family.

It is found in the nucleus. Transcription factor that plays a role of repressor of filamentous growth and flocculation. Antagonizes functions of SFL2 and FLO8. Plays a role in the hyphal repression induced by secreted factors like dodecanol by competitors such as Pseudomonas aeruginosa and Burkholderia cenocepacia. The chain is Transcription factor SFL1 (SFL1) from Candida albicans (strain SC5314 / ATCC MYA-2876) (Yeast).